A 500-amino-acid polypeptide reads, in one-letter code: Autophagy-related protein 18 (500 aa).

Residues aspartate 3 to serine 41 form a WD 1 repeat. Positions valine 174–leucine 197 are disordered. Basic and acidic residues predominate over residues serine 181 to isoleucine 194. 2 WD repeats span residues alanine 243–glutamine 283 and threonine 288–lysine 327. Positions phenylalanine 284–threonine 288 match the L/FRRG motif motif. A disordered region spans residues leucine 328 to asparagine 358. Acidic residues predominate over residues aspartate 331–serine 344. Serine 354 is subject to Phosphoserine.

The protein belongs to the WD repeat PROPPIN family. As to quaternary structure, component of the PI(3,5)P2 regulatory complex, composed of ATG18, FIG4, FAB1, VAC14 and VAC7. VAC14 nucleates the assembly of the complex and serves as a scaffold. Interacts with ATG2, ATG9 and VAC17. The ATG2-ATG18 complex is essential for autophagosome formation.

It is found in the preautophagosomal structure membrane. Its subcellular location is the vacuole membrane. It localises to the endosome membrane. The PI(3,5)P2 regulatory complex regulates both the synthesis and turnover of phosphatidylinositol 3,5-bisphosphate (PtdIns(3,5)P2). May negatively regulate FAB1 activity by sequestering or masking VAC7 from FAB1. Necessary for proper vacuole morphology. Plays an important role in osmotically-induced vacuole fragmentation. Required for cytoplasm to vacuole transport (Cvt) vesicle formation, pexophagy and starvation-induced autophagy. Involved in correct ATG9 trafficking to the pre-autophagosomal structure. Might also be involved in premeiotic DNA replication. With ATG2, protects ATG8 from ARG4-mediated cleavage. This Saccharomyces cerevisiae (strain YJM789) (Baker's yeast) protein is Autophagy-related protein 18 (ATG18).